The sequence spans 248 residues: Phosphatidylglycerol--prolipoprotein diacylglyceryl transferase (248 aa).

Helical transmembrane passes span Phe6–Leu26, Ile48–Glu68, and Gly84–Cys104. Arg130 provides a ligand contact to a 1,2-diacyl-sn-glycero-3-phospho-(1'-sn-glycerol). 2 helical membrane-spanning segments follow: residues Gly187–Leu207 and Ile214–Leu234.

This sequence belongs to the Lgt family.

The protein resides in the cell membrane. The enzyme catalyses L-cysteinyl-[prolipoprotein] + a 1,2-diacyl-sn-glycero-3-phospho-(1'-sn-glycerol) = an S-1,2-diacyl-sn-glyceryl-L-cysteinyl-[prolipoprotein] + sn-glycerol 1-phosphate + H(+). The protein operates within protein modification; lipoprotein biosynthesis (diacylglyceryl transfer). Catalyzes the transfer of the diacylglyceryl group from phosphatidylglycerol to the sulfhydryl group of the N-terminal cysteine of a prolipoprotein, the first step in the formation of mature lipoproteins. This is Phosphatidylglycerol--prolipoprotein diacylglyceryl transferase from Finegoldia magna (strain ATCC 29328 / DSM 20472 / WAL 2508) (Peptostreptococcus magnus).